The chain runs to 156 residues: Large ribosomal subunit protein uL15 (156 aa).

The disordered stretch occupies residues 1–48 (MKLHDLKPTPGSRKDRKRVGRGPGGTDKTAGRGHKGQKSRSGAGKGAF).

The protein belongs to the universal ribosomal protein uL15 family. As to quaternary structure, part of the 50S ribosomal subunit. Contacts proteins L4, L21 and L35.

Its function is as follows. Binds to the 23S rRNA. This is Large ribosomal subunit protein uL15 (rplO) from Deinococcus radiodurans (strain ATCC 13939 / DSM 20539 / JCM 16871 / CCUG 27074 / LMG 4051 / NBRC 15346 / NCIMB 9279 / VKM B-1422 / R1).